Reading from the N-terminus, the 280-residue chain is Fructose-1,6-bisphosphatase class 1 (280 aa).

Glu-64, Asp-83, Leu-85, and Asp-86 together coordinate Mg(2+). Residues 86–89, Tyr-190, and Lys-221 each bind substrate; that span reads DGSS. Glu-227 contributes to the Mg(2+) binding site.

Belongs to the FBPase class 1 family. As to quaternary structure, homotetramer. It depends on Mg(2+) as a cofactor.

The protein localises to the cytoplasm. It carries out the reaction beta-D-fructose 1,6-bisphosphate + H2O = beta-D-fructose 6-phosphate + phosphate. Its pathway is carbohydrate biosynthesis; gluconeogenesis. In Campylobacter hominis (strain ATCC BAA-381 / DSM 21671 / CCUG 45161 / LMG 19568 / NCTC 13146 / CH001A), this protein is Fructose-1,6-bisphosphatase class 1.